The sequence spans 160 residues: Cytochrome b6-f complex subunit 4 (160 aa).

3 helical membrane-spanning segments follow: residues 36-56, 95-115, and 131-151; these read LLYIFPVVILGTIACVVGLAV, LLGIALQTLIPLGLMILPFIE, and SLFLFGTVLTMYLGIGACLPI.

This sequence belongs to the cytochrome b family. PetD subfamily. In terms of assembly, the 4 large subunits of the cytochrome b6-f complex are cytochrome b6, subunit IV (17 kDa polypeptide, PetD), cytochrome f and the Rieske protein, while the 4 small subunits are PetG, PetL, PetM and PetN. The complex functions as a dimer.

The protein localises to the cellular thylakoid membrane. Component of the cytochrome b6-f complex, which mediates electron transfer between photosystem II (PSII) and photosystem I (PSI), cyclic electron flow around PSI, and state transitions. The protein is Cytochrome b6-f complex subunit 4 of Prochlorococcus marinus (strain NATL2A).